Consider the following 439-residue polypeptide: tRNA-2-methylthio-N(6)-dimethylallyladenosine synthase (439 aa).

Residues 2–119 (KYIYIKTWGC…LAQMIDKVEK (118 aa)) enclose the MTTase N-terminal domain. [4Fe-4S] cluster is bound by residues C11, C48, C82, C156, C160, and C163. One can recognise a Radical SAM core domain in the interval 142 to 374 (KKTGYTASIS…QNCINKQTMS (233 aa)). The 63-residue stretch at 377 to 439 (RKMLKSTQSV…HTHSLQGELI (63 aa)) folds into the TRAM domain.

The protein belongs to the methylthiotransferase family. MiaB subfamily. In terms of assembly, monomer. [4Fe-4S] cluster is required as a cofactor.

The protein resides in the cytoplasm. It carries out the reaction N(6)-dimethylallyladenosine(37) in tRNA + (sulfur carrier)-SH + AH2 + 2 S-adenosyl-L-methionine = 2-methylsulfanyl-N(6)-dimethylallyladenosine(37) in tRNA + (sulfur carrier)-H + 5'-deoxyadenosine + L-methionine + A + S-adenosyl-L-homocysteine + 2 H(+). In terms of biological role, catalyzes the methylthiolation of N6-(dimethylallyl)adenosine (i(6)A), leading to the formation of 2-methylthio-N6-(dimethylallyl)adenosine (ms(2)i(6)A) at position 37 in tRNAs that read codons beginning with uridine. In Buchnera aphidicola subsp. Schizaphis graminum (strain Sg), this protein is tRNA-2-methylthio-N(6)-dimethylallyladenosine synthase.